A 151-amino-acid chain; its full sequence is FAD synthase (151 aa).

ATP is bound by residues 12-13, 17-20, D97, and Y125; these read TF and HPGH.

Belongs to the archaeal FAD synthase family. As to quaternary structure, homodimer. A divalent metal cation is required as a cofactor.

It carries out the reaction FMN + ATP + H(+) = FAD + diphosphate. The protein operates within cofactor biosynthesis; FAD biosynthesis; FAD from FMN: step 1/1. Catalyzes the transfer of the AMP portion of ATP to flavin mononucleotide (FMN) to produce flavin adenine dinucleotide (FAD) coenzyme. The protein is FAD synthase of Methanococcus vannielii (strain ATCC 35089 / DSM 1224 / JCM 13029 / OCM 148 / SB).